We begin with the raw amino-acid sequence, 308 residues long: uncharacterized protein (308 aa).

Transmembrane regions (helical) follow at residues 6-26, 31-51, 63-83, 100-120, 128-148, 162-182, 195-215, 221-241, 257-277, and 287-307; these read VVLI…FGIL, AKIL…FLTI, FLKL…LAYL, ILVS…LGMF, AIFC…YVGI, MAKF…FFGF, LNYL…LSLS, FGVF…PATA, VLLV…GTLY, and SIFI…WILL.

The protein belongs to the auxin efflux carrier (TC 2.A.69) family.

It is found in the cell membrane. This is an uncharacterized protein from Methanocaldococcus jannaschii (strain ATCC 43067 / DSM 2661 / JAL-1 / JCM 10045 / NBRC 100440) (Methanococcus jannaschii).